Consider the following 231-residue polypeptide: Acyl-protein thioesterase 2 (231 aa).

The S-palmitoyl cysteine moiety is linked to residue Cys2. Phosphoserine is present on Ser82. Residues Ser122, Asp176, and His210 each act as charge relay system in the active site.

It belongs to the AB hydrolase superfamily. AB hydrolase 2 family. Expressed in various breast cancer cell lines.

The protein resides in the cytoplasm. It carries out the reaction S-hexadecanoyl-L-cysteinyl-[protein] + H2O = L-cysteinyl-[protein] + hexadecanoate + H(+). The enzyme catalyses prostaglandin E2 1-glyceryl ester + H2O = prostaglandin E2 + glycerol + H(+). The catalysed reaction is 1-hexadecanoyl-sn-glycero-3-phosphocholine + H2O = sn-glycerol 3-phosphocholine + hexadecanoate + H(+). It catalyses the reaction 1-octadecanoyl-sn-glycero-3-phosphocholine + H2O = octadecanoate + sn-glycerol 3-phosphocholine + H(+). It carries out the reaction 1-hexadecanoyl-sn-glycero-3-phosphate + H2O = sn-glycerol 3-phosphate + hexadecanoate + H(+). The enzyme catalyses 1-hexadecanoyl-sn-glycero-3-phospho-L-serine + H2O = sn-glycero-3-phospho-L-serine + hexadecanoate + H(+). With respect to regulation, inhibited by compound 1 or (5,5-Dioxido-4H-thieno[3,2-c]thiochromen-2-yl)(4-(4-methoxyphenyl)piperazin-1-yl)methanone. Its function is as follows. Acts as an acyl-protein thioesterase hydrolyzing fatty acids from S-acylated cysteine residues in proteins such as trimeric G alpha proteins, GSDMD, GAP43, ZDHHC6 or HRAS. Deacylates GAP43. Mediates depalmitoylation of ZDHHC6. Has lysophospholipase activity. Hydrolyzes prostaglandin glycerol esters (PG-Gs) in the following order prostaglandin D2-glycerol ester (PGD2-G) &gt; prostaglandin E2 glycerol ester (PGE2-G) &gt; prostaglandin F2-alpha-glycerol ester (PGF2-alpha-G). Hydrolyzes 1-arachidonoylglycerol but not 2-arachidonoylglycerol or arachidonoylethanolamide. The chain is Acyl-protein thioesterase 2 (LYPLA2) from Homo sapiens (Human).